A 401-amino-acid polypeptide reads, in one-letter code: Nodal homolog 3-B (401 aa).

Residues 1–18 (MALLNLFFCLVFSSPLMA) form the signal peptide. The propeptide occupies 19-274 (MPPVLQGRKS…KVNGFRRLRR (256 aa)). Residues Asn-168, Asn-337, Asn-341, and Asn-344 are each glycosylated (N-linked (GlcNAc...) asparagine). 2 cysteine pairs are disulfide-bonded: Cys-299/Cys-365 and Cys-328/Cys-396.

It belongs to the TGF-beta family. In terms of assembly, monomer. The propeptide region interacts with bmp4 in a non-covalent manner. Expressed in the dorsal marginal region of late blastula, becoming restricted to the dorsal blastopore lip (Spemann organizer) at the early gastrula stage.

The protein localises to the secreted. Functionally, exhibits mesoderm-dorsalizing activity and neural-inducing activity, but lacks mesoderm-inducing activity. Regulates the expression of specific mesodermal and neural genes. Induces convergent extension movements at the embryonic midline by activating the fgf signaling pathway to induce t/bra expression in the organizer region. Acts with wnt11 to induce Spemann organizer cells and induce axis formation. The unprocessed protein antagonizes bmp-signaling. This is Nodal homolog 3-B (nodal3-b) from Xenopus laevis (African clawed frog).